The following is an 856-amino-acid chain: Leucine--tRNA ligase (856 aa).

The 'HIGH' region signature appears at 53–63; that stretch reads PYPSGNLHMGH. The 'KMSKS' region motif lies at 622 to 626; the sequence is KMSKS. Residue Lys625 participates in ATP binding.

The protein belongs to the class-I aminoacyl-tRNA synthetase family.

It is found in the cytoplasm. The catalysed reaction is tRNA(Leu) + L-leucine + ATP = L-leucyl-tRNA(Leu) + AMP + diphosphate. The protein is Leucine--tRNA ligase of Prochlorococcus marinus (strain MIT 9301).